The following is a 301-amino-acid chain: Putative S-adenosyl-L-methionine-dependent methyltransferase MMAR_4850 (301 aa).

S-adenosyl-L-methionine-binding positions include Asp-127 and 156 to 157 (DL).

It belongs to the UPF0677 family.

Exhibits S-adenosyl-L-methionine-dependent methyltransferase activity. The sequence is that of Putative S-adenosyl-L-methionine-dependent methyltransferase MMAR_4850 from Mycobacterium marinum (strain ATCC BAA-535 / M).